The sequence spans 283 residues: Polyamine aminopropyltransferase (283 aa).

In terms of domain architecture, PABS spans 5 to 238 (TTWIDEYQKG…GIWSWTFASK (234 aa)). Gln-32 serves as a coordination point for S-methyl-5'-thioadenosine. 2 residues coordinate spermidine: His-63 and Asp-87. Residues Glu-107 and 139 to 140 (DG) each bind S-methyl-5'-thioadenosine. The active-site Proton acceptor is Asp-158. A spermidine-binding site is contributed by 158–161 (DCSD).

It belongs to the spermidine/spermine synthase family. Homodimer or homotetramer.

The protein resides in the cytoplasm. It catalyses the reaction S-adenosyl 3-(methylsulfanyl)propylamine + putrescine = S-methyl-5'-thioadenosine + spermidine + H(+). Its pathway is amine and polyamine biosynthesis; spermidine biosynthesis; spermidine from putrescine: step 1/1. In terms of biological role, catalyzes the irreversible transfer of a propylamine group from the amino donor S-adenosylmethioninamine (decarboxy-AdoMet) to putrescine (1,4-diaminobutane) to yield spermidine. The sequence is that of Polyamine aminopropyltransferase from Prochlorococcus marinus (strain MIT 9515).